Here is a 326-residue protein sequence, read N- to C-terminus: ELAV-like protein 1 (326 aa).

Position 2 is an N-acetylserine (S2). At S2 the chain carries Phosphoserine. The RRM 1 domain maps to 20 to 98 (TNLIVNYLPQ…KTIKVSYARP (79 aa)). Residues S100 and S158 each carry the phosphoserine modification. An RRM 2 domain is found at 106–186 (ANLYISGLPR…EPITVKFAAN (81 aa)). K191 participates in a covalent cross-link: Glycyl lysine isopeptide (Lys-Gly) (interchain with G-Cter in SUMO2). 2 positions are modified to phosphoserine: S197 and S202. Omega-N-methylarginine is present on R206. An Asymmetric dimethylarginine; by CARM1; alternate modification is found at R217. The residue at position 217 (R217) is an Omega-N-methylarginine; alternate. Residues S221 and S318 each carry the phosphoserine modification. The 79-residue stretch at 244 to 322 (WCIFIYNLGQ…KILQVSFKTN (79 aa)) folds into the RRM 3 domain.

This sequence belongs to the RRM elav family. Monomer and homodimer (in vitro). Interacts with ANP32A. Interacts with ZNF385A; the interaction is indirect and mRNA-dependent and may regulate p53/TP53 expression. Identified in a mRNP complex, at least composed of DHX9, DDX3X, ELAVL1, HNRNPU, IGF2BP1, ILF3, PABPC1, PCBP2, PTBP2, STAU1, STAU2, SYNCRIP and YBX1. Interacts with AGO1 and AGO2. Interacts with IGF2BP1. Interacts with IGF2BP2 and IGF2BP3. Interacts with HNRNPL. Interacts with DHX36; this interaction occurs in a RNA-dependent manner. Interacts with ILF3; this interaction occurs in a RNA-dependent manner. Interacts with PLEKHN1. Interacts with SHFL; the interaction increases in presence of RNA. Interacts with YBX1; interaction recruits ELAVL1 on C5-methylcytosine (m5C)-containing mRNAs, thereby promoting mRNA stability. Interacts with FXR1. Phosphorylated by MAPKAPK2. Phosphorylated by PRKCD. In terms of processing, methylated at Arg-217 by CARM1 in T-cells in response to LPS challenge.

It localises to the cytoplasm. The protein localises to the nucleus. Its subcellular location is the stress granule. The protein resides in the P-body. RNA-binding protein that binds to the 3'-UTR region of mRNAs and increases their stability. Involved in embryonic stem cell (ESC) differentiation: preferentially binds mRNAs that are not methylated by N6-methyladenosine (m6A), stabilizing them, promoting ESC differentiation. Has also been shown to be capable of binding to m6A-containing mRNAs and contributes to MYC stability by binding to m6A-containing MYC mRNAs. Binds to poly-U elements and AU-rich elements (AREs) in the 3'-UTR of target mRNAs. Binds avidly to the AU-rich element in FOS and IL3/interleukin-3 mRNAs. In the case of the FOS AU-rich element, binds to a core element of 27 nucleotides that contain AUUUA, AUUUUA, and AUUUUUA motifs. Binds preferentially to the 5'-UUUU[AG]UUU-3' motif in vitro. With ZNF385A, binds the 3'-UTR of p53/TP53 mRNA to control their nuclear export induced by CDKN2A. Hence, may regulate p53/TP53 expression and mediate in part the CDKN2A anti-proliferative activity. May also bind with ZNF385A the CCNB1 mRNA. Increases the stability of the leptin mRNA harboring an AU-rich element (ARE) in its 3' UTR. The protein is ELAV-like protein 1 (Elavl1) of Mus musculus (Mouse).